A 757-amino-acid chain; its full sequence is Polyribonucleotide nucleotidyltransferase (757 aa).

Mg(2+) contacts are provided by Asp531 and Asp537. The 60-residue stretch at 597-656 (PRVTTIRVPVDKIGEVIGPKGKIINAITEETGAQISIEDDGTVFVGATDGPSAQAAIDRI) folds into the KH domain. One can recognise an S1 motif domain in the interval 668–737 (GERFLGTVVK…KRGKISLVLV (70 aa)).

This sequence belongs to the polyribonucleotide nucleotidyltransferase family. Mg(2+) is required as a cofactor.

It localises to the cytoplasm. It carries out the reaction RNA(n+1) + phosphate = RNA(n) + a ribonucleoside 5'-diphosphate. In terms of biological role, involved in mRNA degradation. Catalyzes the phosphorolysis of single-stranded polyribonucleotides processively in the 3'- to 5'-direction. The sequence is that of Polyribonucleotide nucleotidyltransferase from Mycolicibacterium paratuberculosis (strain ATCC BAA-968 / K-10) (Mycobacterium paratuberculosis).